We begin with the raw amino-acid sequence, 151 residues long: MKVIFMQDVKGRGKRGQVKDVPNGYAQNYLIKQGLAKEANKCNLNTLKRVEANEKAEYEAQKAAAQEIKKQLEADETVVELKAKAGSDSRLFGSISSKKIIEGLDKQFGIKLDKHKLELREPIKVLGYTNVPVKLFKGVESKVRVHVTQEN.

It belongs to the bacterial ribosomal protein bL9 family.

Binds to the 23S rRNA. In Lactobacillus delbrueckii subsp. bulgaricus (strain ATCC BAA-365 / Lb-18), this protein is Large ribosomal subunit protein bL9.